The sequence spans 1481 residues: Neuropathy target esterase sws (1481 aa).

Residues methionine 1 to serine 34 lie on the Lumenal side of the membrane. Residues leucine 35–phenylalanine 55 form a helical membrane-spanning segment. Residues lysine 56–asparagine 1481 lie on the Cytoplasmic side of the membrane. Isoleucine 175–arginine 302 contacts a nucleoside 3',5'-cyclic phosphate. The disordered stretch occupies residues histidine 336 to glycine 420. Composition is skewed to low complexity over residues serine 339–glutamine 379 and serine 401–asparagine 412. Position 448 is a phosphoserine (serine 448). A nucleoside 3',5'-cyclic phosphate-binding positions include glutamate 492 to arginine 624 and isoleucine 613 to arginine 740. The PNPLA domain maps to leucine 967–arginine 1133. Positions glycine 971–glycine 976 match the GXGXXG motif. Residues glycine 998–glycine 1002 carry the GXSXG motif. The active-site Nucleophile is serine 1000. Residue aspartate 1120 is the Proton acceptor of the active site. The DGA/G signature appears at aspartate 1120 to glycine 1122. Position 1214 is a phosphoserine (serine 1214). A disordered region spans residues leucine 1366 to asparagine 1481. Basic and acidic residues-rich tracts occupy residues isoleucine 1379–alanine 1390 and lysine 1400–aspartate 1410. Over residues threonine 1445 to threonine 1457 the composition is skewed to low complexity.

It belongs to the NTE family. As to quaternary structure, interacts with Pka-C3; interaction inhibits the catalytic function of Pka-C3 and the esterase activity of sws.

Its subcellular location is the endoplasmic reticulum membrane. It catalyses the reaction a 1-acyl-sn-glycero-3-phosphocholine + H2O = sn-glycerol 3-phosphocholine + a fatty acid + H(+). In terms of biological role, phospholipase B that deacylates intracellular phosphatidylcholine (PtdCho), generating glycerophosphocholine (GroPtdCho). This deacylation occurs at both sn-2 and sn-1 positions of PtdCho. Its specific chemical modification by certain organophosphorus (OP) compounds leads to distal axonopathy. Plays a role in the signaling mechanism between neurons and glia that regulates glia wrapping during development of the adult brain. Essential for membrane lipid homeostasis and cell survival in both neurons and glia of the adult brain. In Drosophila willistoni (Fruit fly), this protein is Neuropathy target esterase sws.